A 317-amino-acid chain; its full sequence is ATP synthase gamma chain (317 aa).

It belongs to the ATPase gamma chain family. As to quaternary structure, F-type ATPases have 2 components, CF(1) - the catalytic core - and CF(0) - the membrane proton channel. CF(1) has five subunits: alpha(3), beta(3), gamma(1), delta(1), epsilon(1). CF(0) has three main subunits: a, b and c.

The protein resides in the cellular thylakoid membrane. Its function is as follows. Produces ATP from ADP in the presence of a proton gradient across the membrane. The gamma chain is believed to be important in regulating ATPase activity and the flow of protons through the CF(0) complex. The sequence is that of ATP synthase gamma chain from Synechococcus sp. (strain CC9311).